The primary structure comprises 370 residues: Early nodulin-like protein 1 (370 aa).

A signal peptide spans 1 to 27 (MSAIMKSLCFSFLILASFATFFSVADA). Positions 28–129 (WRFNVGGNGA…GQKLIVVVLA (102 aa)) constitute a Phytocyanin domain. The N-linked (GlcNAc...) asparagine glycan is linked to Asn58. Cys83 and Cys117 are oxidised to a cystine. Over residues 135–175 (SAPAHSPVPSVSPTQPPKSHSPVSPVAPASAPSKSQPPRSS) the composition is skewed to low complexity. Residues 135–347 (SAPAHSPVPS…PAPSPRTNSA (213 aa)) are disordered. The segment covering 176 to 194 (VSPAQPPKSSSPISHTPAL) has biased composition (polar residues). 2 stretches are compositionally biased toward low complexity: residues 195-205 (SPSHATSHSPA) and 215-290 (SPVS…QSPA). Residues 291-305 (TPSPMTPQSPSPVSS) are compositionally biased toward pro residues. A compositionally biased stretch (low complexity) spans 306 to 318 (PSPDQSAAPSDQS). The span at 319 to 334 (TPLAPSPSETTPTADN) shows a compositional bias: polar residues. N-linked (GlcNAc...) asparagine glycosylation occurs at Asn334. Asn345 carries the GPI-anchor amidated asparagine lipid modification. The propeptide at 346-370 (SASGLAVTSVMSTLFSATFTFLMFA) is removed in mature form.

Belongs to the early nodulin-like (ENODL) family. In terms of tissue distribution, mostly expressed in stems, leaves and flowers, and, to a lower extent, in seedlings, roots and seeds.

It is found in the cell membrane. In terms of biological role, may act as a carbohydrate transporter. The chain is Early nodulin-like protein 1 from Arabidopsis thaliana (Mouse-ear cress).